The following is a 106-amino-acid chain: Somatoliberin (106 aa).

The first 19 residues, Met1–Gly19, serve as a signal peptide directing secretion. Residues Ser20 to Arg30 constitute a propeptide that is removed on maturation. A Leucine amide modification is found at Leu74. The propeptide occupies Gln77–Gly106.

It belongs to the glucagon family.

Its subcellular location is the secreted. Its function is as follows. GRF is released by the hypothalamus and acts on the adenohypophyse to stimulate the secretion of growth hormone. The sequence is that of Somatoliberin (GHRH) from Bos taurus (Bovine).